Here is a 201-residue protein sequence, read N- to C-terminus: Recombination protein RecR (201 aa).

A C4-type zinc finger spans residues 60–75 (CKTCGNIDTQNPCTVC). The region spanning 83–178 (SIIVVVADVA…KVTRLAHGVP (96 aa)) is the Toprim domain.

It belongs to the RecR family.

Its function is as follows. May play a role in DNA repair. It seems to be involved in an RecBC-independent recombinational process of DNA repair. It may act with RecF and RecO. In Rhodopseudomonas palustris (strain HaA2), this protein is Recombination protein RecR.